Here is a 410-residue protein sequence, read N- to C-terminus: Elongation factor Tu, chloroplastic (410 aa).

One can recognise a tr-type G domain in the interval 10–215 (KPHVNIGTIG…AVDQYIPTPK (206 aa)). A G1 region spans residues 19-26 (GHVDHGKT). 19–26 (GHVDHGKT) lines the GTP pocket. Residue threonine 26 participates in Mg(2+) binding. Residues 61–65 (GITIN) are G2. The segment at 82 to 85 (DCPG) is G3. GTP contacts are provided by residues 82–86 (DCPGH) and 137–140 (NKQD). The segment at 137 to 140 (NKQD) is G4. The interval 175–177 (SAL) is G5.

The protein belongs to the TRAFAC class translation factor GTPase superfamily. Classic translation factor GTPase family. EF-Tu/EF-1A subfamily.

The protein resides in the plastid. It localises to the chloroplast. The catalysed reaction is GTP + H2O = GDP + phosphate + H(+). Functionally, GTP hydrolase that promotes the GTP-dependent binding of aminoacyl-tRNA to the A-site of ribosomes during protein biosynthesis. The chain is Elongation factor Tu, chloroplastic (tufA) from Nephroselmis olivacea (Green alga).